Reading from the N-terminus, the 194-residue chain is Holliday junction branch migration complex subunit RuvA (194 aa).

The tract at residues 1–64 (MISRLTGKLV…EDAHLLFGFA (64 aa)) is domain I. The domain II stretch occupies residues 65-143 (TAEERKTFRQ…AHAVTDGLFA (79 aa)). The flexible linker stretch occupies residues 144–147 (AAPA). The tract at residues 147–194 (AADETEDIVGTLLALGYSEREAKAAVKGVPEGTDVGEGVRLALKNLLK) is domain III.

This sequence belongs to the RuvA family. As to quaternary structure, homotetramer. Forms an RuvA(8)-RuvB(12)-Holliday junction (HJ) complex. HJ DNA is sandwiched between 2 RuvA tetramers; dsDNA enters through RuvA and exits via RuvB. An RuvB hexamer assembles on each DNA strand where it exits the tetramer. Each RuvB hexamer is contacted by two RuvA subunits (via domain III) on 2 adjacent RuvB subunits; this complex drives branch migration. In the full resolvosome a probable DNA-RuvA(4)-RuvB(12)-RuvC(2) complex forms which resolves the HJ.

It localises to the cytoplasm. Its function is as follows. The RuvA-RuvB-RuvC complex processes Holliday junction (HJ) DNA during genetic recombination and DNA repair, while the RuvA-RuvB complex plays an important role in the rescue of blocked DNA replication forks via replication fork reversal (RFR). RuvA specifically binds to HJ cruciform DNA, conferring on it an open structure. The RuvB hexamer acts as an ATP-dependent pump, pulling dsDNA into and through the RuvAB complex. HJ branch migration allows RuvC to scan DNA until it finds its consensus sequence, where it cleaves and resolves the cruciform DNA. The polypeptide is Holliday junction branch migration complex subunit RuvA (Neisseria meningitidis serogroup A / serotype 4A (strain DSM 15465 / Z2491)).